A 95-amino-acid polypeptide reads, in one-letter code: Integration host factor subunit beta (95 aa).

Belongs to the bacterial histone-like protein family. In terms of assembly, heterodimer of an alpha and a beta chain.

Its function is as follows. This protein is one of the two subunits of integration host factor, a specific DNA-binding protein that functions in genetic recombination as well as in transcriptional and translational control. In Shewanella amazonensis (strain ATCC BAA-1098 / SB2B), this protein is Integration host factor subunit beta.